The following is a 285-amino-acid chain: Pantothenate synthetase (285 aa).

30–37 (MGFLHEGH) contributes to the ATP binding site. The Proton donor role is filled by His37. Gln61 contributes to the (R)-pantoate binding site. Gln61 serves as a coordination point for beta-alanine. 147 to 150 (GQKD) is an ATP binding site. Gln153 provides a ligand contact to (R)-pantoate. ATP contacts are provided by residues Val176 and 184–187 (KSSR).

It belongs to the pantothenate synthetase family. In terms of assembly, homodimer.

The protein resides in the cytoplasm. The enzyme catalyses (R)-pantoate + beta-alanine + ATP = (R)-pantothenate + AMP + diphosphate + H(+). The protein operates within cofactor biosynthesis; (R)-pantothenate biosynthesis; (R)-pantothenate from (R)-pantoate and beta-alanine: step 1/1. In terms of biological role, catalyzes the condensation of pantoate with beta-alanine in an ATP-dependent reaction via a pantoyl-adenylate intermediate. This is Pantothenate synthetase from Listeria welshimeri serovar 6b (strain ATCC 35897 / DSM 20650 / CCUG 15529 / CIP 8149 / NCTC 11857 / SLCC 5334 / V8).